Reading from the N-terminus, the 589-residue chain is V-type ATP synthase alpha chain (589 aa).

Position 239–246 (239–246 (GPFGAGKT)) interacts with ATP.

This sequence belongs to the ATPase alpha/beta chains family.

The enzyme catalyses ATP + H2O + 4 H(+)(in) = ADP + phosphate + 5 H(+)(out). Produces ATP from ADP in the presence of a proton gradient across the membrane. The V-type alpha chain is a catalytic subunit. In Treponema denticola (strain ATCC 35405 / DSM 14222 / CIP 103919 / JCM 8153 / KCTC 15104), this protein is V-type ATP synthase alpha chain.